The following is a 70-amino-acid chain: DNA-directed RNA polymerase subunit omega (70 aa).

The protein belongs to the RNA polymerase subunit omega family. As to quaternary structure, the RNAP catalytic core consists of 2 alpha, 1 beta, 1 beta' and 1 omega subunit. When a sigma factor is associated with the core the holoenzyme is formed, which can initiate transcription.

The catalysed reaction is RNA(n) + a ribonucleoside 5'-triphosphate = RNA(n+1) + diphosphate. In terms of biological role, promotes RNA polymerase assembly. Latches the N- and C-terminal regions of the beta' subunit thereby facilitating its interaction with the beta and alpha subunits. The chain is DNA-directed RNA polymerase subunit omega from Staphylococcus saprophyticus subsp. saprophyticus (strain ATCC 15305 / DSM 20229 / NCIMB 8711 / NCTC 7292 / S-41).